Consider the following 247-residue polypeptide: Phycobilisome rod-core linker polypeptide CpcG2 (247 aa).

The PBS-linker domain occupies 11-189; that stretch reads SSQNQRVPGY…YWRDKLESER (179 aa). Residues 223 to 247 form a disordered region; it reads PDTTRNTTPTGIPISVNPSANFPVR.

Belongs to the phycobilisome linker protein family. In terms of assembly, part of the phycobilisome, a hemidiscoidal structure that is composed of two distinct substructures: a core complex and a number of rods radiating from the core.

It localises to the cellular thylakoid membrane. Its function is as follows. Rod-core linker protein required for attachment of phycocyanin to allophycocyanin in cores of phycobilisomes. Functionally, linker polypeptides determine the state of aggregation and the location of the disk-shaped phycobiliprotein units within the phycobilisome and modulate their spectroscopic properties in order to mediate a directed and optimal energy transfer. This Nostoc sp. (strain PCC 7120 / SAG 25.82 / UTEX 2576) protein is Phycobilisome rod-core linker polypeptide CpcG2.